The following is a 182-amino-acid chain: Ribosome-recycling factor (182 aa).

It belongs to the RRF family.

It is found in the cytoplasm. Its function is as follows. Responsible for the release of ribosomes from messenger RNA at the termination of protein biosynthesis. May increase the efficiency of translation by recycling ribosomes from one round of translation to another. The chain is Ribosome-recycling factor from Synechococcus sp. (strain JA-2-3B'a(2-13)) (Cyanobacteria bacterium Yellowstone B-Prime).